The following is a 302-amino-acid chain: Lysosomal thioesterase PPT2 (302 aa).

Residues 1-27 (MLGLCGQRLPAAWVLLLLPFLPLLLLA) form the signal peptide. The N-linked (GlcNAc...) asparagine glycan is linked to asparagine 60. 2 cysteine pairs are disulfide-bonded: cysteine 109-cysteine 117 and cysteine 165-cysteine 176. The active-site Nucleophile is the serine 111. 2 N-linked (GlcNAc...) asparagine glycosylation sites follow: asparagine 190 and asparagine 206. Aspartate 228 is an active-site residue. N-linked (GlcNAc...) asparagine glycosylation is present at asparagine 245. Cysteine 276 and cysteine 296 are oxidised to a cystine. The active site involves histidine 283. A glycan (N-linked (GlcNAc...) asparagine) is linked at asparagine 289.

This sequence belongs to the palmitoyl-protein thioesterase family. Broadly expressed, with highest levels in skeletal muscle.

The protein resides in the lysosome. It catalyses the reaction hexadecanoyl-CoA + H2O = hexadecanoate + CoA + H(+). The enzyme catalyses S-hexadecanoyl-N-acetylcysteamine + H2O = N-acetylcysteamine + hexadecanoate + H(+). Its function is as follows. Catalyzes the cleavage of thioester bonds from S-palmitoyl-CoA or S-palmitoyl-N-acetylcysteamine (unbranched structures) but does not have activity against palmitoylcysteine or palmitoylated proteins, branched structures or bulky head groups. Conversely, hydrolyzes both long and short chain fatty acyl-CoA substrate. Functionally, catalytically inactive due to lack of active site His-283. The chain is Lysosomal thioesterase PPT2 from Homo sapiens (Human).